We begin with the raw amino-acid sequence, 141 residues long: Lutropin subunit beta (141 aa).

Positions 1 to 20 are cleaved as a signal peptide; the sequence is MEMLQGLLLWLLLNVGGVWA. Disulfide bonds link Cys-29–Cys-77, Cys-43–Cys-92, Cys-46–Cys-130, Cys-54–Cys-108, Cys-58–Cys-110, and Cys-113–Cys-120. An N-linked (GlcNAc...) asparagine glycan is attached at Asn-33.

It belongs to the glycoprotein hormones subunit beta family. As to quaternary structure, heterodimer of a common alpha chain and a unique beta chain which confers biological specificity to thyrotropin, lutropin, follitropin and gonadotropin.

It is found in the secreted. Its function is as follows. Promotes spermatogenesis and ovulation by stimulating the testes and ovaries to synthesize steroids. The polypeptide is Lutropin subunit beta (LHB) (Ailurus fulgens (Himalayan red panda)).